The primary structure comprises 87 residues: Putative regulatory protein CHY_1489 (87 aa).

The protein belongs to the RemA family.

This chain is Putative regulatory protein CHY_1489, found in Carboxydothermus hydrogenoformans (strain ATCC BAA-161 / DSM 6008 / Z-2901).